The sequence spans 557 residues: NADP-dependent malic enzyme (557 aa).

Y91 functions as the Proton donor in the catalytic mechanism. Position 144 (R144) interacts with NADP(+). Residues R144 and K162 each coordinate substrate. K162 acts as the Proton acceptor in catalysis. E234 and D235 together coordinate Mn(2+). Position 238 (N238) interacts with NADP(+). A Mn(2+)-binding site is contributed by D258. NADP(+) is bound by residues 291-294 (AGEA), S325, N397, and N443. Position 443 (N443) interacts with substrate.

This sequence belongs to the malic enzymes family. Homotetramer. Mg(2+) is required as a cofactor. It depends on Mn(2+) as a cofactor. The N-terminus is blocked.

The protein localises to the cytoplasm. The enzyme catalyses (S)-malate + NADP(+) = pyruvate + CO2 + NADPH. It catalyses the reaction oxaloacetate + H(+) = pyruvate + CO2. This is NADP-dependent malic enzyme (ME1) from Columba livia (Rock dove).